Consider the following 622-residue polypeptide: MRKLYCVLLLSAFEFTYMINFGRGQNYWEHPYQNSNVYHPINEHREHPKEYQYPLHQEHTYQQEDSGEDENTLQHAYPIDHEGAEPAPQEQNLFSSIEIVERSNYMGNPWTEYMAKYDIEEVHGSGIRVDLGEDAEVAGTQYRLPSGKCPVFGKGIIIENSNTTFLKPVATGNQDLKDGGFAFPPTEPLISPMTLNGMRDFYKNNEYVKNLDELTLCSRHAGNMNPDKDENSNYKYPAVYDDKDKKCHILYIAAQENNGPRYCNKDESKRNSMFCFRPAKDKSFQNYTYLSKNVVDNWEKVCPRKNLENAKFGLWVDGNCEDIPHVNEFSANDLFECNKLVFELSASDQPKQYEQHLTDYEKIKEGFKNKNASMIKSAFLPTGAFKADRYKSHGKGYNWGNYNRKTHKCEIFNVKPTCLINNSSYIATTALSHPIEVENNFPCSLYKNEIMKEIERESKRIKLNDNDDEGNKKIIAPRIFISDDKDSLKCPCDPEMVSNSTCRFFVCKCVERRAEVTSNNEVVVKEEYKDEYADIPEHKPTYDNMKIIIASSAAVAVLATILMVYLYKRKGNAEKYDKMDQPQDYGKSTSRNDEMLDPEASFWGEEKRASHTTPVLMEKPYY.

An N-terminal signal peptide occupies residues 1-24; that stretch reads MRKLYCVLLLSAFEFTYMINFGRG. Over 25-546 the chain is Extracellular; that stretch reads QNYWEHPYQN…EHKPTYDNMK (522 aa). Intrachain disulfides connect Cys-149/Cys-302, Cys-217/Cys-247, Cys-263/Cys-275, Cys-320/Cys-418, and Cys-337/Cys-409. A glycan (N-linked (GlcNAc...) asparagine) is linked at Asn-162. N-linked (GlcNAc...) asparagine glycans are attached at residues Asn-286, Asn-371, Asn-421, Asn-422, and Asn-499. Intrachain disulfides connect Cys-443-Cys-502, Cys-490-Cys-507, and Cys-492-Cys-509. Residues 547 to 567 traverse the membrane as a helical segment; it reads IIIASSAAVAVLATILMVYLY. Residues 568–622 are Cytoplasmic-facing; sequence KRKGNAEKYDKMDQPQDYGKSTSRNDEMLDPEASFWGEEKRASHTTPVLMEKPYY. Positions 577–607 are disordered; that stretch reads DKMDQPQDYGKSTSRNDEMLDPEASFWGEEK.

This sequence belongs to the apicomplexan parasites AMA1 family.

Its subcellular location is the membrane. In terms of biological role, involved in parasite invasion of erythrocytes. The chain is Apical membrane antigen 1 (AMA-1) from Plasmodium falciparum (isolate Camp / Malaysia).